Reading from the N-terminus, the 186-residue chain is Apolipophorin-3 (186 aa).

The first 18 residues, 1-18 (MAAKYVFVVAACSALAQA), serve as a signal peptide directing secretion. The propeptide occupies 19–23 (GIVRR).

It belongs to the insect apolipophorin-3 family. Equilibrium between a soluble monomer and a bound lipoprotein form. Apolipophorin-3 associates with lipophorin during lipid loading until each particle contains 9 or 14 molecules of apolipophorin-3. As to expression, expressed in hemolymph. Also found in hemocytes and fat body.

Its subcellular location is the secreted. Assists in the loading of diacylglycerol, generated from triacylglycerol stores in the fat body through the action of adipokinetic hormone, into lipophorin, the hemolymph lipoprotein. It increases the lipid carrying capacity of lipophorin by covering the expanding hydrophobic surface resulting from diacylglycerol uptake. It thus plays a critical role in the transport of lipids during flight in several species of insects. Has antibacterial activity against the Gram-positive bacteria L.monocytogenes (MIC=6.5 uM). Lacks antibacterial activity against the Gram-positive bacteria B.circulans, M.luteus, S.aureus, and S.lutea, and the Gram-negative bacteria E.coli D31, E.coli ATCC 25922, and S.typhimurium. Lacks antifungal activity against S.cerevisiae, P.pastoris, Z.marxianus, C.albicans, C.wickerhamii, A.niger, F.oxysporum, and T.harizianum. The protein is Apolipophorin-3 of Galleria mellonella (Greater wax moth).